The chain runs to 54 residues: UPF0391 membrane protein pRL90066 (54 aa).

2 helical membrane passes run 5–25 and 28–48; these read ALVF…GIAG and ASIA…SLVM.

This sequence belongs to the UPF0391 family.

The protein resides in the cell membrane. The protein is UPF0391 membrane protein pRL90066 of Rhizobium johnstonii (strain DSM 114642 / LMG 32736 / 3841) (Rhizobium leguminosarum bv. viciae).